Consider the following 355-residue polypeptide: MGCRQSSEEKEAARRSRRIDRHLRSESQRQRREIKLLLLGTSNSGKSTIVKQMKIIHSGGFNLEACKEYKPLIIYNAIDSLTRIIRALAALKIDFHNPDRAYDAVQLFALTGPAESKGEITPELLGVMRRLWADPGAQACFGRSSEYHLEDNAAYYLNDLERIAAPDYIPTVEDILRSRDMTTGIVENKFTFKELTFKMVDVGGQRSERKKWIHCFEGVTAIIFCVELSGYDLKLYEDNQTSRMAESLRLFDSICNNNWFINTSLILFLNKKDLLSEKIRRIPLSVCFPEYKGQNTYEEAAVYIQRQFEDLNRNKETKEIYSHFTCATDTSNIQFVFDAVTDVIIQNNLKYIGLC.

Residues 1–14 (MGCRQSSEEKEAAR) are compositionally biased toward basic and acidic residues. The disordered stretch occupies residues 1-26 (MGCRQSSEEKEAARRSRRIDRHLRSE). G2 carries N-myristoyl glycine lipidation. C3 carries the S-palmitoyl cysteine lipid modification. The G-alpha domain maps to 32–355 (REIKLLLLGT…QNNLKYIGLC (324 aa)). The interval 35–48 (KLLLLGTSNSGKST) is G1 motif. Residues 40–47 (GTSNSGKS), 176–182 (LRSRDMT), 201–205 (DVGGQ), 270–273 (NKKD), and A327 contribute to the GTP site. Residues S47 and T182 each contribute to the Mg(2+) site. The interval 174–182 (DILRSRDMT) is G2 motif. The tract at residues 197-206 (FKMVDVGGQR) is G3 motif. Residues 266–273 (ILFLNKKD) are G4 motif. Residues 325 to 330 (TCATDT) form a G5 motif region.

This sequence belongs to the G-alpha family. G(i/o/t/z) subfamily. As to quaternary structure, G-proteins are composed of 3 units; alpha, beta and gamma. The alpha chain contains the guanine nucleotide binding site. Interacts with ADGRB2.

The protein localises to the membrane. Guanine nucleotide-binding proteins (G proteins) are involved as modulators or transducers in various transmembrane signaling systems. The chain is Guanine nucleotide-binding protein G(z) subunit alpha (Gnaz) from Rattus norvegicus (Rat).